The chain runs to 334 residues: Succinate receptor 1 (334 aa).

Over 5–31 (MAWNATCKNWLAAEAALEKYYLSIFYG) the chain is Extracellular. Asn8 is a glycosylation site (N-linked (GlcNAc...) asparagine). A helical transmembrane segment spans residues 32-52 (IEFVVGVLGNTIVVYGYIFSL). The Cytoplasmic segment spans residues 53-59 (KNWNSSN). A helical transmembrane segment spans residues 60 to 80 (IYLFNLSVSDLAFLCTLPMLI). At 81-103 (RSYANGNWIYGDVLCISNRYVLH) the chain is on the extracellular side. The cysteines at positions 95 and 172 are disulfide-linked. Residues 104 to 124 (ANLYTSILFLTFISIDRYLII) traverse the membrane as a helical segment. At 125–137 (KYPFREHLLQKKE) the chain is on the cytoplasmic side. The chain crosses the membrane as a helical span at residues 138-158 (FAILISLAIWVLVTLELLPIL). Over 159–185 (PLINPVITDNGTTCNDFASSGDPNYNL) the chain is Extracellular. The N-linked (GlcNAc...) asparagine glycan is linked to Asn168. Residues 186 to 206 (IYSMCLTLLGFLIPLFVMCFF) form a helical membrane-spanning segment. Over 207 to 230 (YYKIALFLKQRNRQVATALPLEKP) the chain is Cytoplasmic. A helical membrane pass occupies residues 231 to 251 (LNLVIMAVVIFSVLFTPYHVM). Residues 252-281 (RNVRIASRLGSWKQYQCTQVVINSFYIVTR) are Extracellular-facing. Residues 282 to 302 (PLAFLNSVINPVFYFLLGDHF) form a helical membrane-spanning segment. Residues 303–334 (RDMLMNQLRHNFKSLTSFSRWAHELLLSFREK) lie on the Cytoplasmic side of the membrane.

This sequence belongs to the G-protein coupled receptor 1 family. In terms of tissue distribution, expressed specifically in kidney. Highly expressed in immature dendritic cells, expression rapidly downregulates after maturation. Also expressed in macrophages.

The protein resides in the cell membrane. Functionally, g protein-coupled receptor for succinate able to mediate signaling through Gq/GNAQ or Gi/GNAI second messengers depending on the cell type and the processes regulated. Succinate-SUCNR1 signaling serves as a link between metabolic stress, inflammation and energy homeostasis. In macrophages, plays a range of immune-regulatory roles. During inflammation, succinate-SUCNR1 signaling may act as an anti-inflammatory mediator or boost inflammation depending on the inflammatory status of cells. Hyperpolarizes M2 macrophages versus M1 phenotype through Gq signaling by regulating the transcription of genes involved in immune function. In activated M1 macrophages, plays a pro-inflammatory role in response to LPS. Expressed in dendritic cells, where it is involved in the sensing of immunological danger and enhances immunity. Mediates succinate triggered intracelleular calcium mobilization, induces migratory responses and acts in synergy with Toll-like receptor ligands for the production of proinflammatory cytokines as well as an enhancement of antigen-specific activation of helper T cells. In the small intestine, mediates the activation of tuft cells by dietary succinate and triggers type 2 immunity. In adipocytes, plays an important role in the control of energy metabolism. In response to succinate, controls leptin expression in an AMPK-JNK-CEBPA-dependent as well as circadian clock-regulated manner. In muscle tissue, is expressed in non-muscle cells and coordinates muscle remodeling in response to the succinate produced during exercise training in a paracrine manner. In retina, acts as a mediator of vessel growth during retinal development. In response to succinate, regulates the production of angiogenic factors, including VEGF, by retinal ganglion neurons. In Homo sapiens (Human), this protein is Succinate receptor 1.